Consider the following 87-residue polypeptide: Costars family protein (87 aa).

This sequence belongs to the costars family.

The polypeptide is Costars family protein (Oryza sativa subsp. indica (Rice)).